We begin with the raw amino-acid sequence, 225 residues long: Ribosome maturation factor RimM (225 aa).

Residues 144–225 enclose the PRC barrel domain; that stretch reads ADEFYWVDLI…RIVVDWEADY (82 aa).

This sequence belongs to the RimM family. As to quaternary structure, binds ribosomal protein uS19.

It is found in the cytoplasm. Functionally, an accessory protein needed during the final step in the assembly of 30S ribosomal subunit, possibly for assembly of the head region. Essential for efficient processing of 16S rRNA. May be needed both before and after RbfA during the maturation of 16S rRNA. It has affinity for free ribosomal 30S subunits but not for 70S ribosomes. This chain is Ribosome maturation factor RimM, found in Burkholderia vietnamiensis (strain G4 / LMG 22486) (Burkholderia cepacia (strain R1808)).